The chain runs to 360 residues: Alanine racemase (360 aa).

The Proton acceptor; specific for D-alanine role is filled by Lys-34. Lys-34 is modified (N6-(pyridoxal phosphate)lysine). Arg-129 provides a ligand contact to substrate. Catalysis depends on Tyr-254, which acts as the Proton acceptor; specific for L-alanine. Met-302 serves as a coordination point for substrate.

Belongs to the alanine racemase family. Pyridoxal 5'-phosphate serves as cofactor.

The enzyme catalyses L-alanine = D-alanine. It functions in the pathway amino-acid biosynthesis; D-alanine biosynthesis; D-alanine from L-alanine: step 1/1. In terms of biological role, catalyzes the interconversion of L-alanine and D-alanine. May also act on other amino acids. The polypeptide is Alanine racemase (alr) (Pectobacterium atrosepticum (strain SCRI 1043 / ATCC BAA-672) (Erwinia carotovora subsp. atroseptica)).